A 99-amino-acid polypeptide reads, in one-letter code: Small ribosomal subunit protein bS18 (99 aa).

The segment at 1 to 25 (MAESKGRPGSASQRPTGGDKAIAGQ) is disordered.

The protein belongs to the bacterial ribosomal protein bS18 family. As to quaternary structure, part of the 30S ribosomal subunit. Forms a tight heterodimer with protein bS6.

Binds as a heterodimer with protein bS6 to the central domain of the 16S rRNA, where it helps stabilize the platform of the 30S subunit. This chain is Small ribosomal subunit protein bS18, found in Solibacter usitatus (strain Ellin6076).